Consider the following 337-residue polypeptide: Glyceraldehyde-3-phosphate dehydrogenase 1 (337 aa).

NAD(+) is bound by residues 11–12 (RI), Asp33, and Arg78. Residues 149 to 151 (SCT), Thr180, 209 to 210 (TG), and Arg232 each bind D-glyceraldehyde 3-phosphate. Cys150 serves as the catalytic Nucleophile. NAD(+) is bound at residue Asn318.

It belongs to the glyceraldehyde-3-phosphate dehydrogenase family. As to quaternary structure, homotetramer.

Its subcellular location is the cytoplasm. The catalysed reaction is D-glyceraldehyde 3-phosphate + phosphate + NAD(+) = (2R)-3-phospho-glyceroyl phosphate + NADH + H(+). The protein operates within carbohydrate degradation; glycolysis; pyruvate from D-glyceraldehyde 3-phosphate: step 1/5. This chain is Glyceraldehyde-3-phosphate dehydrogenase 1 (gpd1), found in Agaricus bisporus (White button mushroom).